The sequence spans 986 residues: Rho guanine nucleotide exchange factor 2 (986 aa).

The Phorbol-ester/DAG-type zinc-finger motif lies at 39 to 86 (GHLFTTISVSGMTMCYACNKSITAKEALICPTCNVTIHNRCKDTLANC). 5 positions are modified to phosphoserine: S109, S122, S129, S133, and S137. Positions 131–161 (RQSLLGSRRGRSSLSLAKSVSTTNIAGHFND) are interaction with DYNLT1. S143 carries the post-translational modification Phosphoserine; by PAK4. 5 positions are modified to phosphoserine: S151, S163, S172, S174, and S177. A DH domain is found at 235–432 (KQQDVIYELI…KELLSNVDEG (198 aa)). K353 bears the N6-acetyllysine mark. A PH domain is found at 472-571 (KLIHDGCLLW…WIRVIQQSVR (100 aa)). The stretch at 587-611 (EAYLRRIKMELQQKDRALVELLREK) forms a coiled coil. S645 and S648 each carry phosphoserine. At T679 the chain carries Phosphothreonine; by MAPK1 or MAPK3. The interval 683–705 (PALPLEPDSGGNTSPGVTANGEA) is disordered. Phosphoserine occurs at positions 691, 696, 711, and 782. Residues 798–867 (EKQATELALL…RQLAALGQTE (70 aa)) are a coiled coil. The segment at 862 to 986 (ALGQTEPLPA…RDGEAVASES (125 aa)) is disordered. S886 is subject to Phosphoserine; by PAK1 and AURKA. Y894 bears the Phosphotyrosine mark. S896 is modified (phosphoserine; by PAK4). Over residues 920–939 (RNFEDRERQELGSPEERLQD) the composition is skewed to basic and acidic residues. Residues S932, S940, and S941 each carry the phosphoserine modification. Residues 941-950 (SDPDTGSEEE) show a composition bias toward acidic residues. T945 is subject to Phosphothreonine. Phosphoserine occurs at positions 947, 952, 953, 956, and 960.

Found in a complex composed at least of ARHGEF2, NOD2 and RIPK2. Interacts with RIPK2; the interaction mediates tyrosine phosphorylation of RIPK2 by Src kinase CSK. Interacts with RIPK1 and RIPK3. Interacts with YWHAZ/14-3-3 zeta; when phosphorylated at Ser-886. Interacts with the kinases PAK4, AURKA and MAPK1. Interacts with RHOA and RAC1. Interacts with NOD1. Interacts (via the N-terminal zinc finger) with CAPN6 (via domain II). Interacts with DYNLT1. In terms of processing, phosphorylation of Ser-886 by PAK1 induces binding to protein YWHAZ, promoting its relocation to microtubules and the inhibition of its activity. Phosphorylated by AURKA and CDK1 during mitosis, which negatively regulates its activity. Phosphorylation by MAPK1 or MAPK3 increases nucleotide exchange activity. Phosphorylation by PAK4 releases GEF-H1 from the microtubules. Phosphorylated on serine, threonine and tyrosine residues in a RIPK2-dependent manner.

It is found in the cytoplasm. The protein localises to the cytoskeleton. Its subcellular location is the cell junction. It localises to the tight junction. The protein resides in the golgi apparatus. It is found in the spindle. The protein localises to the cell projection. Its subcellular location is the ruffle membrane. It localises to the cytoplasmic vesicle. Activates Rho-GTPases by promoting the exchange of GDP for GTP. May be involved in epithelial barrier permeability, cell motility and polarization, dendritic spine morphology, antigen presentation, leukemic cell differentiation, cell cycle regulation, innate immune response, and cancer. Binds Rac-GTPases, but does not seem to promote nucleotide exchange activity toward Rac-GTPases, which was uniquely reported in PubMed:9857026. May stimulate instead the cortical activity of Rac. Inactive toward CDC42, TC10, or Ras-GTPases. Forms an intracellular sensing system along with NOD1 for the detection of microbial effectors during cell invasion by pathogens. Required for RHOA and RIP2 dependent NF-kappaB signaling pathways activation upon S.flexneri cell invasion. Involved not only in sensing peptidoglycan (PGN)-derived muropeptides through NOD1 that is independent of its GEF activity, but also in the activation of NF-kappaB by Shigella effector proteins (IpgB2 and OspB) which requires its GEF activity and the activation of RhoA. Involved in innate immune signaling transduction pathway promoting cytokine IL6/interleukin-6 and TNF-alpha secretion in macrophage upon stimulation by bacterial peptidoglycans; acts as a signaling intermediate between NOD2 receptor and RIPK2 kinase. Contributes to the tyrosine phosphorylation of RIPK2 through Src tyrosine kinase leading to NF-kappaB activation by NOD2. Overexpression activates Rho-, but not Rac-GTPases, and increases paracellular permeability. Involved in neuronal progenitor cell division and differentiation. Involved in the migration of precerebellar neurons. This Homo sapiens (Human) protein is Rho guanine nucleotide exchange factor 2 (ARHGEF2).